The chain runs to 371 residues: Thyroid transcription factor 1 (371 aa).

The homeobox DNA-binding region spans Arg161–Ala220. Disordered stretches follow at residues Gln219–Ala294 and Ser308–Gly342. A compositionally biased stretch (gly residues) spans Ser233–Gly243. Composition is skewed to low complexity over residues Cys244–Gln253 and Ala272–Ala294.

The protein belongs to the NK-2 homeobox family. Phosphorylated on serine residues. Thyroid, lung and CNS.

The protein resides in the nucleus. In terms of biological role, transcription factor that binds and activates the promoter of thyroid specific genes such as thyroglobulin, thyroperoxidase, and thyrotropin receptor. Crucial in the maintenance of the thyroid differentiation phenotype. May play a role in lung development and surfactant homeostasis. The protein is Thyroid transcription factor 1 (TITF1) of Canis lupus familiaris (Dog).